A 348-amino-acid polypeptide reads, in one-letter code: Trace amine-associated receptor 9 (348 aa).

The Extracellular segment spans residues 1-33 (MVNNFSQAEAVELCYKNVNESCIKTPYSPGPRS). 2 N-linked (GlcNAc...) asparagine glycosylation sites follow: Asn4 and Asn19. Intrachain disulfides connect Cys22–Cys186 and Cys105–Cys190. Residues 34–58 (ILYAVLGFGAVLAAFGNLLVMIAIL) form a helical membrane-spanning segment. At 59–68 (HFKQLHTPTN) the chain is on the cytoplasmic side. The chain crosses the membrane as a helical span at residues 69–90 (FLIASLACADFLVGVTVMPFST). Residues 91–105 (VRSVESCWYFGDSYC) are Extracellular-facing. Residues 106–128 (KFHTCFDTSFCFASLFHLCCISV) traverse the membrane as a helical segment. Positions 112 and 113 each coordinate spermidine. Topologically, residues 129 to 148 (DRYIAVTDPLTYPTKFTVSV) are cytoplasmic. A helical transmembrane segment spans residues 149-170 (SGICIVLSWFFSVTYSFSIFYT). The Extracellular portion of the chain corresponds to 171 to 196 (GANEEGIEELVVALTCVGGCQAPLNQ). The extracellular Loop 2 (ECL2) stretch occupies residues 174–187 (EEGIEELVVALTCV). The chain crosses the membrane as a helical span at residues 197-218 (NWVLLCFLLFFIPNVAMVFIYS). Topologically, residues 219 to 256 (KIFLVAKHQARKIESTASQAQSSSESYKERVAKRERKA) are cytoplasmic. Residues 257 to 280 (AKTLGIAMAAFLVSWLPYLVDAVI) form a helical membrane-spanning segment. Over 281–293 (DAYMNFITPPYVY) the chain is Extracellular. A helical transmembrane segment spans residues 294–314 (EILVWCVYYNSAMNPLIYAFF). Over 315-348 (YQWFGKAIKLIVSGKVLRTDSSTTNLFSEEVETD) the chain is Cytoplasmic.

The protein belongs to the G-protein coupled receptor 1 family.

It localises to the cell membrane. In terms of biological role, olfactory receptor specific for trace amines, such as N,N-dimethylcyclohexylamine (DMCHA) and beta-phenylethylamine (beta-PEA). In contrast to mouse and rat orthologs, not activated by triethylamine, cadaverine (CAD) or spermidine. Trace amine compounds are enriched in animal body fluids and act on trace amine-associated receptors (TAARs) to elicit both intraspecific and interspecific innate behaviors. Trace amine-binding causes a conformation change that triggers signaling via G(s)-class of G alpha proteins (GNAL or GNAS). In mature olfactory sensory neurons, TAAR9 is coupled with GNAL/G(olf)G alpha protein and mediates activation of adenylate cyclase activity to activate cAMP signaling and eventually transmit odorant signals to achieve membrane depolarization. In immature olfactory sensory neurons, TAAR9 is coupled with GNAS/G(s) G alpha proteins. This Homo sapiens (Human) protein is Trace amine-associated receptor 9.